A 240-amino-acid chain; its full sequence is Proteasome subunit alpha (240 aa).

Belongs to the peptidase T1A family. The 20S proteasome core is composed of 14 alpha and 14 beta subunits that assemble into four stacked heptameric rings, resulting in a barrel-shaped structure. The two inner rings, each composed of seven catalytic beta subunits, are sandwiched by two outer rings, each composed of seven alpha subunits. The catalytic chamber with the active sites is on the inside of the barrel. Has a gated structure, the ends of the cylinder being occluded by the N-termini of the alpha-subunits. Is capped by the proteasome-associated ATPase, ARC.

It localises to the cytoplasm. It functions in the pathway protein degradation; proteasomal Pup-dependent pathway. Its activity is regulated as follows. The formation of the proteasomal ATPase ARC-20S proteasome complex, likely via the docking of the C-termini of ARC into the intersubunit pockets in the alpha-rings, may trigger opening of the gate for substrate entry. Interconversion between the open-gate and close-gate conformations leads to a dynamic regulation of the 20S proteasome proteolysis activity. Functionally, component of the proteasome core, a large protease complex with broad specificity involved in protein degradation. This is Proteasome subunit alpha from Frankia casuarinae (strain DSM 45818 / CECT 9043 / HFP020203 / CcI3).